Here is a 206-residue protein sequence, read N- to C-terminus: Large ribosomal subunit protein uL4 (206 aa).

A disordered region spans residues 46 to 89 (GNRAQKTRAEVKHSTKKPWRQKGTGRARSGMTSSPLWRKGGRAF). A compositionally biased stretch (basic residues) spans 59–70 (STKKPWRQKGTG).

Belongs to the universal ribosomal protein uL4 family. Part of the 50S ribosomal subunit.

Functionally, one of the primary rRNA binding proteins, this protein initially binds near the 5'-end of the 23S rRNA. It is important during the early stages of 50S assembly. It makes multiple contacts with different domains of the 23S rRNA in the assembled 50S subunit and ribosome. In terms of biological role, forms part of the polypeptide exit tunnel. The polypeptide is Large ribosomal subunit protein uL4 (Neisseria gonorrhoeae (strain NCCP11945)).